The sequence spans 495 residues: Ferruginol synthase (495 aa).

Residue Met-1 is a topological domain, lumenal. The chain crosses the membrane as a helical span at residues 2 to 22 (DSFPLLAALFFIAATITFLSF). At 23–495 (RRRRNLPPGP…PLRIIPIVKS (473 aa)) the chain is on the cytoplasmic side. Cys-437 is a binding site for heme.

The protein belongs to the cytochrome P450 family. Heme serves as cofactor. In terms of tissue distribution, expression is more abundant in the rhizome.

The protein localises to the endoplasmic reticulum membrane. It catalyses the reaction abieta-8,11,13-triene + reduced [NADPH--hemoprotein reductase] + O2 = ferruginol + oxidized [NADPH--hemoprotein reductase] + H2O + H(+). Functionally, cytochrome P450 enzyme (CYP) which catalyzes a unique two-electron oxidation cascade on abieta-8,11,13-triene to produce ferruginol, an intermediate in tanshinone biosynthesis. The polypeptide is Ferruginol synthase (Salvia miltiorrhiza (Chinese sage)).